The primary structure comprises 120 residues: UPF0344 protein lin2366 (120 aa).

4 helical membrane passes run 3 to 23, 33 to 53, 62 to 82, and 92 to 112; these read GYVH…ALLI, MLQM…IMMV, ILAI…EMLL, and GMFL…GFYL.

Belongs to the UPF0344 family.

The protein resides in the cell membrane. The sequence is that of UPF0344 protein lin2366 from Listeria innocua serovar 6a (strain ATCC BAA-680 / CLIP 11262).